The sequence spans 635 residues: Threonine--tRNA ligase (635 aa).

A TGS domain is found at 1–61; the sequence is MTVVRLPDGT…EIDSDLVLIT (61 aa). Residues 242 to 533 are catalytic; the sequence is DHRKLGKQLD…LIEHHAGALP (292 aa). 3 residues coordinate Zn(2+): Cys333, His384, and His510.

It belongs to the class-II aminoacyl-tRNA synthetase family. Homodimer. The cofactor is Zn(2+).

Its subcellular location is the cytoplasm. It carries out the reaction tRNA(Thr) + L-threonine + ATP = L-threonyl-tRNA(Thr) + AMP + diphosphate + H(+). Catalyzes the attachment of threonine to tRNA(Thr) in a two-step reaction: L-threonine is first activated by ATP to form Thr-AMP and then transferred to the acceptor end of tRNA(Thr). Also edits incorrectly charged L-seryl-tRNA(Thr). This is Threonine--tRNA ligase from Nitrosomonas eutropha (strain DSM 101675 / C91 / Nm57).